Reading from the N-terminus, the 247-residue chain is V-type proton ATPase subunit D (247 aa).

Belongs to the V-ATPase D subunit family. As to quaternary structure, V-ATPase is a heteromultimeric enzyme made up of two complexes: the ATP-hydrolytic V1 complex and the proton translocation V0 complex. The V1 complex consists of three catalytic AB heterodimers that form a heterohexamer, three peripheral stalks each consisting of EG heterodimers, one central rotor including subunits D and F, and the regulatory subunits C and H. The proton translocation complex V0 consists of the proton transport subunit a, a ring of proteolipid subunits c9c'', rotary subunit d, subunits e and f, and the accessory subunits ATP6AP1/Ac45 and ATP6AP2/PRR. Interacts with SNX10.

Its subcellular location is the membrane. It localises to the cytoplasmic vesicle. The protein resides in the clathrin-coated vesicle membrane. It is found in the cytoplasm. The protein localises to the cytoskeleton. Its subcellular location is the microtubule organizing center. It localises to the centrosome. The protein resides in the cell projection. It is found in the cilium. Its function is as follows. Subunit of the V1 complex of vacuolar(H+)-ATPase (V-ATPase), a multisubunit enzyme composed of a peripheral complex (V1) that hydrolyzes ATP and a membrane integral complex (V0) that translocates protons. V-ATPase is responsible for acidifying and maintaining the pH of intracellular compartments and in some cell types, is targeted to the plasma membrane, where it is responsible for acidifying the extracellular environment. May play a role in cilium biogenesis through regulation of the transport and the localization of proteins to the cilium. This Homo sapiens (Human) protein is V-type proton ATPase subunit D (ATP6V1D).